Reading from the N-terminus, the 142-residue chain is Organic hydroperoxide resistance protein-like 2 (142 aa).

The protein belongs to the OsmC/Ohr family.

In Staphylococcus epidermidis (strain ATCC 35984 / DSM 28319 / BCRC 17069 / CCUG 31568 / BM 3577 / RP62A), this protein is Organic hydroperoxide resistance protein-like 2.